A 474-amino-acid polypeptide reads, in one-letter code: Phenylalanine--tRNA ligase alpha subunit (474 aa).

L-phenylalanine-binding positions include Thr317, 356–358 (QLE), and Tyr396. A Mg(2+)-binding site is contributed by Glu398. Phe421 lines the L-phenylalanine pocket.

It belongs to the class-II aminoacyl-tRNA synthetase family. Phe-tRNA synthetase alpha subunit type 2 subfamily. In terms of assembly, tetramer of two alpha and two beta subunits. Mg(2+) serves as cofactor.

The protein resides in the cytoplasm. The enzyme catalyses tRNA(Phe) + L-phenylalanine + ATP = L-phenylalanyl-tRNA(Phe) + AMP + diphosphate + H(+). This chain is Phenylalanine--tRNA ligase alpha subunit, found in Archaeoglobus fulgidus (strain ATCC 49558 / DSM 4304 / JCM 9628 / NBRC 100126 / VC-16).